A 425-amino-acid chain; its full sequence is Peroxisomal membrane protein PEX14 (425 aa).

2 disordered regions span residues 49–89 (RSQG…YRNA) and 247–425 (DEPI…AAQS). Positions 56 to 76 (SSSVASQVSSYSPSASQSSVA) are enriched in low complexity. An SH3-binding motif is present at residues 89–97 (APPLPERDW). The span at 256–297 (PSLTTGANSLTSESSGRSSIPHSQSVPIRTQLTTPPSDSDTS) shows a compositional bias: polar residues. Composition is skewed to basic and acidic residues over residues 315 to 324 (DILRKEKNRT) and 333 to 366 (LGKDLESVAQSDPDKVEKYEGRRDLKSLERPEED).

The protein belongs to the peroxin-14 family. As to quaternary structure, interacts with PEX13 (via SH3 domain); forming the PEX13-PEX14 docking complex. Interacts with PEX5 (via WxxxF/Y motifs). Interacts with PEX20 (via WxxxF/Y motifs). Interacts with PEX3, PEX7, PEX8 and PEX17. Post-translationally, phosphorylated on serine or threonine residues.

It is found in the peroxisome membrane. In terms of biological role, component of the PEX13-PEX14 docking complex, a translocon channel that specifically mediates the import of peroxisomal cargo proteins bound to PEX5 or PEX20 receptors. The PEX13-PEX14 docking complex forms a large import pore which can be opened to a diameter of about 9 nm. Mechanistically, PEX5 (or PEX20) receptor along with cargo proteins associates with the PEX14 subunit of the PEX13-PEX14 docking complex in the cytosol, leading to the insertion of the receptor into the organelle membrane with the concomitant translocation of the cargo into the peroxisome matrix. The polypeptide is Peroxisomal membrane protein PEX14 (Komagataella pastoris (Yeast)).